The primary structure comprises 241 residues: Phycocyanobilin:ferredoxin oxidoreductase (241 aa).

It belongs to the HY2 family.

The enzyme catalyses (2R,3Z)-phycocyanobilin + 4 oxidized [2Fe-2S]-[ferredoxin] = biliverdin IXalpha + 4 reduced [2Fe-2S]-[ferredoxin] + 4 H(+). Catalyzes the four-electron reduction of biliverdin IX-alpha (2-electron reduction at both the A and D rings); the reaction proceeds via an isolatable 2-electron intermediate, 181,182-dihydrobiliverdin. In Prochlorococcus marinus (strain MIT 9301), this protein is Phycocyanobilin:ferredoxin oxidoreductase.